The sequence spans 345 residues: tRNA N6-adenosine threonylcarbamoyltransferase (345 aa).

The Fe cation site is built by histidine 111 and histidine 115. Substrate-binding positions include leucine 136–glycine 140, aspartate 169, glycine 182, and asparagine 279. Aspartate 307 contacts Fe cation.

This sequence belongs to the KAE1 / TsaD family. It depends on Fe(2+) as a cofactor.

Its subcellular location is the cytoplasm. It carries out the reaction L-threonylcarbamoyladenylate + adenosine(37) in tRNA = N(6)-L-threonylcarbamoyladenosine(37) in tRNA + AMP + H(+). Functionally, required for the formation of a threonylcarbamoyl group on adenosine at position 37 (t(6)A37) in tRNAs that read codons beginning with adenine. Is involved in the transfer of the threonylcarbamoyl moiety of threonylcarbamoyl-AMP (TC-AMP) to the N6 group of A37, together with TsaE and TsaB. TsaD likely plays a direct catalytic role in this reaction. In Actinobacillus succinogenes (strain ATCC 55618 / DSM 22257 / CCUG 43843 / 130Z), this protein is tRNA N6-adenosine threonylcarbamoyltransferase.